A 170-amino-acid polypeptide reads, in one-letter code: Tubulin polymerization-promoting protein family member 2 (170 aa).

Positions 127-170 (TGTHKERFDESGKGKGIAGREEMTDNTGYVSGYKGSGTYDKKTK) are disordered. Residues 129 to 149 (THKERFDESGKGKGIAGREEM) show a composition bias toward basic and acidic residues.

The protein belongs to the TPPP family. Expressed in spermatids. Detected in liver cancer (at protein level).

It is found in the cytoplasm. The protein resides in the cytosol. Its subcellular location is the cell projection. It localises to the cilium. The protein localises to the flagellum. Its function is as follows. Probable regulator of microtubule dynamics required for sperm motility. In contrast to other members of the family, has no microtubule bundling activity. This chain is Tubulin polymerization-promoting protein family member 2, found in Homo sapiens (Human).